Consider the following 320-residue polypeptide: TPR repeat-containing protein MJ0263 (320 aa).

9 TPR repeats span residues 12 to 45 (ILKD…DKDN), 46 to 79 (PLVL…EGTS), 80 to 113 (LLSL…SKPC), 114 to 147 (YLSP…YPNL), 148 to 181 (TSIL…KKDD), 182 to 215 (AHAW…NENL), 216 to 249 (VHVY…FPND), 250 to 283 (VEAK…KNVK), and 289 to 320 (KSSI…DNNI).

The protein is TPR repeat-containing protein MJ0263 of Methanocaldococcus jannaschii (strain ATCC 43067 / DSM 2661 / JAL-1 / JCM 10045 / NBRC 100440) (Methanococcus jannaschii).